We begin with the raw amino-acid sequence, 377 residues long: Nucleosome assembly protein 1;3 (377 aa).

Positions 26 to 80 (VNVLKNKLQGLTGKHSNVLENLSPNVRKRVEVLREIQTQHDELEAKFFEERAALE) form a coiled coil. Residues 47-62 (LSPNVRKRVEVLREIQ) carry the Nuclear export signal motif. The Nuclear localization signal signature appears at 223–228 (KKKPKK). The tract at residues 298-377 (EAAQDEDYID…GERPPECKQQ (80 aa)) is disordered. Over residues 300–341 (AQDEDYIDLEDDEDEEDDEDEDEDEEDEEEEDEDEDDDDEDE) the composition is skewed to acidic residues. A compositionally biased stretch (basic residues) spans 345 to 357 (KTKKKSSAGRKRS). Cysteine 374 carries the cysteine methyl ester modification. Cysteine 374 carries the S-farnesyl cysteine lipid modification. Positions 375–377 (KQQ) are cleaved as a propeptide — removed in mature form.

The protein belongs to the nucleosome assembly protein (NAP) family. Can form homomeric and heteromeric protein complexes with NAP1;4. Binds histones H2A and H2B in vivo. Also able to bind histones H1 and H4 in vitro. Interacts with CYCB1;1 and with alpha tubulin.

The protein localises to the nucleus. The protein resides in the cytoplasm. Functionally, may modulate chromatin structure by regulation of nucleosome assembly/disassembly. Could function together with B-type cyclins in the regulation of microtubule dynamics. This Nicotiana tabacum (Common tobacco) protein is Nucleosome assembly protein 1;3 (NAP1;3).